Here is a 78-residue protein sequence, read N- to C-terminus: Small ribosomal subunit protein bS16c (78 aa).

The protein belongs to the bacterial ribosomal protein bS16 family.

It localises to the plastid. The protein resides in the chloroplast. This Phaeodactylum tricornutum (strain CCAP 1055/1) protein is Small ribosomal subunit protein bS16c.